We begin with the raw amino-acid sequence, 672 residues long: Acetyl-coenzyme A synthetase (672 aa).

CoA is bound by residues 205 to 208 (RGGK) and Thr-325. ATP contacts are provided by residues 401 to 403 (GEP), 425 to 430 (DTYWQT), Asp-516, and Arg-531. Residue Ser-539 participates in CoA binding. An ATP-binding site is contributed by Arg-542. Arg-600 is a binding site for CoA.

Belongs to the ATP-dependent AMP-binding enzyme family.

It catalyses the reaction acetate + ATP + CoA = acetyl-CoA + AMP + diphosphate. This is Acetyl-coenzyme A synthetase (facA) from Phycomyces blakesleeanus (strain ATCC 8743b / DSM 1359 / FGSC 10004 / NBRC 33097 / NRRL 1555).